A 281-amino-acid polypeptide reads, in one-letter code: Shikimate dehydrogenase (NADP(+)) (281 aa).

Shikimate is bound by residues S20 to S22 and T67. K71 serves as the catalytic Proton acceptor. D83 provides a ligand contact to NADP(+). The shikimate site is built by N92 and D108. NADP(+)-binding positions include G133 to A137, N157 to R162, and M225. Y227 is a binding site for shikimate. G248 contacts NADP(+).

It belongs to the shikimate dehydrogenase family. As to quaternary structure, homodimer.

The catalysed reaction is shikimate + NADP(+) = 3-dehydroshikimate + NADPH + H(+). It functions in the pathway metabolic intermediate biosynthesis; chorismate biosynthesis; chorismate from D-erythrose 4-phosphate and phosphoenolpyruvate: step 4/7. Its function is as follows. Involved in the biosynthesis of the chorismate, which leads to the biosynthesis of aromatic amino acids. Catalyzes the reversible NADPH linked reduction of 3-dehydroshikimate (DHSA) to yield shikimate (SA). This is Shikimate dehydrogenase (NADP(+)) from Paracidovorax citrulli (strain AAC00-1) (Acidovorax citrulli).